The chain runs to 196 residues: Peptidyl-tRNA hydrolase (196 aa).

Tyr17 lines the tRNA pocket. The active-site Proton acceptor is the His22. Positions 69, 71, and 117 each coordinate tRNA.

Belongs to the PTH family. In terms of assembly, monomer.

The protein resides in the cytoplasm. It carries out the reaction an N-acyl-L-alpha-aminoacyl-tRNA + H2O = an N-acyl-L-amino acid + a tRNA + H(+). Functionally, hydrolyzes ribosome-free peptidyl-tRNAs (with 1 or more amino acids incorporated), which drop off the ribosome during protein synthesis, or as a result of ribosome stalling. In terms of biological role, catalyzes the release of premature peptidyl moieties from peptidyl-tRNA molecules trapped in stalled 50S ribosomal subunits, and thus maintains levels of free tRNAs and 50S ribosomes. The polypeptide is Peptidyl-tRNA hydrolase (Pseudarthrobacter chlorophenolicus (strain ATCC 700700 / DSM 12829 / CIP 107037 / JCM 12360 / KCTC 9906 / NCIMB 13794 / A6) (Arthrobacter chlorophenolicus)).